Here is a 373-residue protein sequence, read N- to C-terminus: Sterol-4-alpha-carboxylate 3-dehydrogenase, decarboxylating (373 aa).

Residue methionine 1 is modified to N-acetylmethionine. Phosphothreonine is present on threonine 22. The Proton acceptor role is filled by tyrosine 172. Lysine 176 serves as a coordination point for NAD(+). A helical transmembrane segment spans residues 298–318; sequence WVAYYLALLLSLLVMVISPVI. The short motif at 370–373 is the Prevents secretion from ER element; the sequence is RRVK.

Belongs to the 3-beta-HSD family. Homodimer. As to expression, brain, heart, liver, lung, kidney, skin and placenta.

The protein localises to the endoplasmic reticulum membrane. Its subcellular location is the lipid droplet. It catalyses the reaction a 3beta-hydroxysteroid-4alpha-carboxylate + NADP(+) = a 3-oxosteroid + CO2 + NADPH. It carries out the reaction a 3beta-hydroxysteroid-4alpha-carboxylate + NAD(+) = a 3-oxosteroid + CO2 + NADH. The catalysed reaction is 4alpha-carboxyzymosterol + NADP(+) = zymosterone + CO2 + NADPH. The enzyme catalyses 4alpha-carboxy-4beta-methyl-5alpha-cholest-8-en-3beta-ol + NADP(+) = 4alpha-methyl-5alpha-cholest-8-en-3-one + CO2 + NADPH. It catalyses the reaction 4alpha-carboxy-5alpha-cholest-8-ene-3beta-ol + NADP(+) = 5alpha-cholest-8-en-3-one + CO2 + NADPH. It carries out the reaction 4beta-methylzymosterol-4alpha-carboxylate + NADP(+) = 3-dehydro-4-methylzymosterol + CO2 + NADPH. The catalysed reaction is 4beta-methylzymosterol-4alpha-carboxylate + NAD(+) = 3-dehydro-4-methylzymosterol + CO2 + NADH. The enzyme catalyses 4alpha-carboxy-5alpha-cholest-8-ene-3beta-ol + NAD(+) = 5alpha-cholest-8-en-3-one + CO2 + NADH. It catalyses the reaction 4alpha-carboxy-4beta-methyl-5alpha-cholest-8-en-3beta-ol + NAD(+) = 4alpha-methyl-5alpha-cholest-8-en-3-one + CO2 + NADH. It carries out the reaction 4alpha-carboxyzymosterol + NAD(+) = zymosterone + CO2 + NADH. Its pathway is steroid biosynthesis; zymosterol biosynthesis; zymosterol from lanosterol: step 4/6. Functionally, catalyzes the NAD(P)(+)-dependent oxidative decarboxylation of the C4 methyl groups of 4-alpha-carboxysterols in post-squalene cholesterol biosynthesis. Also plays a role in the regulation of the endocytic trafficking of EGFR. This chain is Sterol-4-alpha-carboxylate 3-dehydrogenase, decarboxylating (NSDHL), found in Homo sapiens (Human).